A 664-amino-acid chain; its full sequence is DNA ligase (664 aa).

NAD(+) is bound by residues 31–35, 80–81, and E110; these read DYEFD and SL. K112 functions as the N6-AMP-lysine intermediate in the catalytic mechanism. 2 residues coordinate NAD(+): R133 and E169. Residues 237 to 257 form the BRCT 1 domain; it reads LEKARKWGFKVPAESELKDSI. NAD(+)-binding residues include K284 and K308. Zn(2+) is bound by residues C402, C405, C420, and C426. The BRCT 2 domain occupies 586-664; that stretch reads NQTNILEGNT…SEEDFLKMLE (79 aa).

It belongs to the NAD-dependent DNA ligase family. LigA subfamily. Mg(2+) serves as cofactor. The cofactor is Mn(2+).

It carries out the reaction NAD(+) + (deoxyribonucleotide)n-3'-hydroxyl + 5'-phospho-(deoxyribonucleotide)m = (deoxyribonucleotide)n+m + AMP + beta-nicotinamide D-nucleotide.. Its function is as follows. DNA ligase that catalyzes the formation of phosphodiester linkages between 5'-phosphoryl and 3'-hydroxyl groups in double-stranded DNA using NAD as a coenzyme and as the energy source for the reaction. It is essential for DNA replication and repair of damaged DNA. The chain is DNA ligase from Christiangramia forsetii (strain DSM 17595 / CGMCC 1.15422 / KT0803) (Gramella forsetii).